A 505-amino-acid chain; its full sequence is Glycerol kinase 3 (505 aa).

Thr-12 lines the ADP pocket. Residues Thr-12, Thr-13, and Ser-14 each coordinate ATP. Thr-12 provides a ligand contact to sn-glycerol 3-phosphate. Arg-16 is a binding site for ADP. Arg-82, Glu-83, Tyr-134, and Asp-249 together coordinate sn-glycerol 3-phosphate. Glycerol is bound by residues Arg-82, Glu-83, Tyr-134, Asp-249, and Gln-250. ADP contacts are provided by Thr-271 and Gly-315. ATP-binding residues include Thr-271, Gly-315, Gln-319, and Gly-416. Gly-416 and Asn-420 together coordinate ADP.

Belongs to the FGGY kinase family.

The enzyme catalyses glycerol + ATP = sn-glycerol 3-phosphate + ADP + H(+). The protein operates within polyol metabolism; glycerol degradation via glycerol kinase pathway; sn-glycerol 3-phosphate from glycerol: step 1/1. With respect to regulation, inhibited by fructose 1,6-bisphosphate (FBP). Its function is as follows. Key enzyme in the regulation of glycerol uptake and metabolism. Catalyzes the phosphorylation of glycerol to yield sn-glycerol 3-phosphate. The chain is Glycerol kinase 3 from Streptomyces avermitilis (strain ATCC 31267 / DSM 46492 / JCM 5070 / NBRC 14893 / NCIMB 12804 / NRRL 8165 / MA-4680).